Here is a 385-residue protein sequence, read N- to C-terminus: Deoxyguanosinetriphosphate triphosphohydrolase-like protein (385 aa).

Over residues 1–14 the composition is skewed to basic and acidic residues; sequence MTEGVEGRSQERSD. The segment at 1–23 is disordered; the sequence is MTEGVEGRSQERSDLAGFAARSA. One can recognise an HD domain in the interval 75 to 204; sequence RLTHSLEVAQ…INYADEIAYN (130 aa).

Belongs to the dGTPase family. Type 2 subfamily.

This is Deoxyguanosinetriphosphate triphosphohydrolase-like protein from Geobacter metallireducens (strain ATCC 53774 / DSM 7210 / GS-15).